Reading from the N-terminus, the 216-residue chain is Cytochrome c biogenesis ATP-binding export protein CcmA (216 aa).

Residues 11–216 (VSASKLTCIR…RKIRLDYRFV (206 aa)) form the ABC transporter domain. Residue 43 to 50 (GPNGAGKT) coordinates ATP.

It belongs to the ABC transporter superfamily. CcmA exporter (TC 3.A.1.107) family. In terms of assembly, the complex is composed of two ATP-binding proteins (CcmA) and two transmembrane proteins (CcmB).

The protein localises to the cell inner membrane. The enzyme catalyses heme b(in) + ATP + H2O = heme b(out) + ADP + phosphate + H(+). In terms of biological role, part of the ABC transporter complex CcmAB involved in the biogenesis of c-type cytochromes; once thought to export heme, this seems not to be the case, but its exact role is uncertain. Responsible for energy coupling to the transport system. The polypeptide is Cytochrome c biogenesis ATP-binding export protein CcmA (Shewanella sp. (strain MR-4)).